The following is a 763-amino-acid chain: Exo-1,4-beta-xylosidase bxlB (763 aa).

Positions 1–23 (MAVFKSWNLALLSSLFIPALCQS) are cleaved as a signal peptide. An N-linked (GlcNAc...) asparagine glycan is attached at N63. D288 is a catalytic residue. 6 N-linked (GlcNAc...) asparagine glycosylation sites follow: N340, N408, N419, N458, N621, and N760.

Belongs to the glycosyl hydrolase 3 family.

It is found in the secreted. It carries out the reaction Hydrolysis of (1-&gt;4)-beta-D-xylans, to remove successive D-xylose residues from the non-reducing termini.. It participates in glycan degradation; xylan degradation. Functionally, xylan 1,4-beta-xylosidase involved in the hydrolysis of xylan, a major structural heterogeneous polysaccharide found in plant biomass representing the second most abundant polysaccharide in the biosphere, after cellulose. Active against rye arabinoxylan and xylohexaose, but not paranitrophenyl-beta-xyloside. In Emericella nidulans (strain FGSC A4 / ATCC 38163 / CBS 112.46 / NRRL 194 / M139) (Aspergillus nidulans), this protein is Exo-1,4-beta-xylosidase bxlB (bxlB).